A 316-amino-acid polypeptide reads, in one-letter code: Acetyl-coenzyme A carboxylase carboxyl transferase subunit alpha (316 aa).

The CoA carboxyltransferase C-terminal domain occupies 39 to 293 (RLQDKSKALT…RGELLTQLKM (255 aa)).

It belongs to the AccA family. As to quaternary structure, acetyl-CoA carboxylase is a heterohexamer composed of biotin carboxyl carrier protein (AccB), biotin carboxylase (AccC) and two subunits each of ACCase subunit alpha (AccA) and ACCase subunit beta (AccD).

The protein localises to the cytoplasm. The enzyme catalyses N(6)-carboxybiotinyl-L-lysyl-[protein] + acetyl-CoA = N(6)-biotinyl-L-lysyl-[protein] + malonyl-CoA. Its pathway is lipid metabolism; malonyl-CoA biosynthesis; malonyl-CoA from acetyl-CoA: step 1/1. Component of the acetyl coenzyme A carboxylase (ACC) complex. First, biotin carboxylase catalyzes the carboxylation of biotin on its carrier protein (BCCP) and then the CO(2) group is transferred by the carboxyltransferase to acetyl-CoA to form malonyl-CoA. The sequence is that of Acetyl-coenzyme A carboxylase carboxyl transferase subunit alpha from Pseudomonas aeruginosa (strain LESB58).